Consider the following 459-residue polypeptide: Glutamyl-tRNA(Gln) amidotransferase subunit A, mitochondrial (459 aa).

Residues Lys-37 and Ser-114 each act as charge relay system in the active site. The active-site Acyl-ester intermediate is the Ser-138.

Belongs to the amidase family. GatA subfamily. In terms of assembly, subunit of the heterotrimeric GatFAB amidotransferase (AdT) complex, composed of A, B and F subunits.

It is found in the mitochondrion. It catalyses the reaction L-glutamyl-tRNA(Gln) + L-glutamine + ATP + H2O = L-glutaminyl-tRNA(Gln) + L-glutamate + ADP + phosphate + H(+). In terms of biological role, allows the formation of correctly charged Gln-tRNA(Gln) through the transamidation of misacylated Glu-tRNA(Gln) in the mitochondria. The reaction takes place in the presence of glutamine and ATP through an activated gamma-phospho-Glu-tRNA(Gln). The protein is Glutamyl-tRNA(Gln) amidotransferase subunit A, mitochondrial of Yarrowia lipolytica (strain CLIB 122 / E 150) (Yeast).